The sequence spans 447 residues: Kynurenine 3-monooxygenase (447 aa).

It belongs to the aromatic-ring hydroxylase family. KMO subfamily. The cofactor is FAD.

It carries out the reaction L-kynurenine + NADPH + O2 + H(+) = 3-hydroxy-L-kynurenine + NADP(+) + H2O. The protein operates within cofactor biosynthesis; NAD(+) biosynthesis; quinolinate from L-kynurenine: step 1/3. In terms of biological role, catalyzes the hydroxylation of L-kynurenine (L-Kyn) to form 3-hydroxy-L-kynurenine (L-3OHKyn). Required for synthesis of quinolinic acid. The sequence is that of Kynurenine 3-monooxygenase from Flavobacterium psychrophilum (strain ATCC 49511 / DSM 21280 / CIP 103535 / JIP02/86).